A 261-amino-acid polypeptide reads, in one-letter code: Ribosomal RNA small subunit methyltransferase G (261 aa).

S-adenosyl-L-methionine contacts are provided by residues Gly-94, Leu-99, 117–119, 145–146, and Arg-164; these read EST and VE.

Belongs to the methyltransferase superfamily. RNA methyltransferase RsmG family.

The protein resides in the cytoplasm. In terms of biological role, specifically methylates the N7 position of a guanine in 16S rRNA. In Rubrobacter xylanophilus (strain DSM 9941 / JCM 11954 / NBRC 16129 / PRD-1), this protein is Ribosomal RNA small subunit methyltransferase G.